We begin with the raw amino-acid sequence, 536 residues long: Probable serine/threonine-protein kinase DDB_G0268550 (536 aa).

Positions 14-305 (EIIEKNYRKG…IDVLEIHPFL (292 aa)) constitute a Protein kinase domain. ATP-binding positions include 20–28 (YRKGGFSKI) and lysine 51. The active-site Proton acceptor is the aspartate 147. The interval 161–192 (DNNNNNNNNNNNNNNNNNNNSNINDDNNNSNS) is disordered.

Belongs to the protein kinase superfamily. Ser/Thr protein kinase family. The cofactor is Mg(2+).

It catalyses the reaction L-seryl-[protein] + ATP = O-phospho-L-seryl-[protein] + ADP + H(+). The catalysed reaction is L-threonyl-[protein] + ATP = O-phospho-L-threonyl-[protein] + ADP + H(+). The polypeptide is Probable serine/threonine-protein kinase DDB_G0268550 (Dictyostelium discoideum (Social amoeba)).